The sequence spans 328 residues: Phosphate acetyltransferase (328 aa).

This sequence belongs to the phosphate acetyltransferase and butyryltransferase family.

Its subcellular location is the cytoplasm. The enzyme catalyses acetyl-CoA + phosphate = acetyl phosphate + CoA. Its pathway is metabolic intermediate biosynthesis; acetyl-CoA biosynthesis; acetyl-CoA from acetate: step 2/2. The sequence is that of Phosphate acetyltransferase (pta) from Staphylococcus aureus (strain MRSA252).